Reading from the N-terminus, the 291-residue chain is Protease HtpX (291 aa).

A run of 2 helical transmembrane segments spans residues 4 to 24 (IALFLATNLAVMIVFSIVLNI) and 36 to 56 (LSGLLVMAVLFGFGGSLVSLL). Residue His-143 coordinates Zn(2+). Residue Glu-144 is part of the active site. Residue His-147 participates in Zn(2+) binding. The next 2 helical transmembrane spans lie at 151-171 (GDMITMTLMQGVVNTFVIFLS) and 199-219 (FIVSTVLEIAFGFLASFLTMW). Glu-225 lines the Zn(2+) pocket.

The protein belongs to the peptidase M48B family. Requires Zn(2+) as cofactor.

The protein resides in the cell inner membrane. This Aliivibrio salmonicida (strain LFI1238) (Vibrio salmonicida (strain LFI1238)) protein is Protease HtpX.